The primary structure comprises 647 residues: tRNA uridine 5-carboxymethylaminomethyl modification enzyme MnmG (647 aa).

FAD is bound by residues 22-27, valine 134, and serine 189; that span reads GAGHAG. 283-297 contributes to the NAD(+) binding site; that stretch reads GARYCPSIEDKIMRF. Glutamine 380 contacts FAD.

It belongs to the MnmG family. As to quaternary structure, homodimer. Heterotetramer of two MnmE and two MnmG subunits. FAD is required as a cofactor.

It is found in the cytoplasm. In terms of biological role, NAD-binding protein involved in the addition of a carboxymethylaminomethyl (cmnm) group at the wobble position (U34) of certain tRNAs, forming tRNA-cmnm(5)s(2)U34. In Desulfotalea psychrophila (strain LSv54 / DSM 12343), this protein is tRNA uridine 5-carboxymethylaminomethyl modification enzyme MnmG.